A 910-amino-acid polypeptide reads, in one-letter code: Schlafen family member 8 (910 aa).

Residues Met1–Pro354 are n'-domain region. Catalysis depends on residues Glu205 and Glu210. The Zn(2+) site is built by His280, Cys282, and Cys319. Residue Gly599–Thr606 participates in ATP binding.

The protein belongs to the Schlafen family. Subgroup III subfamily. Requires Mg(2+) as cofactor. As to expression, in T-cells, expressed at relatively constant levels during development: expressed in immature CD3(-)CD4(-)CD8(-) T-cells (DN stage), in CD4(+)CD8(+) double-positive stage (DP) and mature CD4(+) or CD8(+) thymocytes. Expression is slightly reduced at the DP stage.

It localises to the cytoplasm. In terms of biological role, endoribonuclease that cleaves tRNAs and rRNAs. Cleaves tRNAs 11 nucleotides from the 3'-terminus at the acceptor stem. May be involved in immune system via regulation of inflammation. In Mus musculus (Mouse), this protein is Schlafen family member 8.